The following is a 319-amino-acid chain: Formimidoylglutamase (319 aa).

His-127, Asp-150, His-152, Asp-154, Asp-242, and Asp-244 together coordinate Mn(2+).

It belongs to the arginase family. Mn(2+) is required as a cofactor.

The enzyme catalyses N-formimidoyl-L-glutamate + H2O = formamide + L-glutamate. The protein operates within amino-acid degradation; L-histidine degradation into L-glutamate; L-glutamate from N-formimidoyl-L-glutamate (hydrolase route): step 1/1. Its function is as follows. Catalyzes the conversion of N-formimidoyl-L-glutamate to L-glutamate and formamide. This Halalkalibacterium halodurans (strain ATCC BAA-125 / DSM 18197 / FERM 7344 / JCM 9153 / C-125) (Bacillus halodurans) protein is Formimidoylglutamase.